We begin with the raw amino-acid sequence, 248 residues long: MAGHSQFKNIMHRKGRQDAVRSKMFSKLAREITVAAKAGLPDPTMNARLRLAIQNAKAQSMPKDNIDRAIKKAAGADGENYDEVRYEGYGPGGTAIIVEALTDNRNRTASNVRSIFTKAGGALGETGSVSFSFDHVGEITYKLSVGDADKVMEAAIEAGADDVETDEEGHYITCAFEALGDVSKALESGLGEAETVKAVWRAQNNVPVDEEKAQSLMKLIDSLEDDDDVQNVYSNFEVSEEVLAKLSA.

This sequence belongs to the TACO1 family.

The protein localises to the cytoplasm. This is Probable transcriptional regulatory protein RHECIAT_CH0003714 from Rhizobium etli (strain CIAT 652).